Consider the following 81-residue polypeptide: Short neurotoxin 1 (81 aa).

An N-terminal signal peptide occupies residues 1 to 21 (MKTLLLTLVVVTIVCLDLGYT). Disulfide bonds link Cys-24–Cys-43, Cys-38–Cys-60, Cys-62–Cys-73, and Cys-74–Cys-79.

It belongs to the three-finger toxin family. Short-chain subfamily. Type I alpha-neurotoxin sub-subfamily. In terms of tissue distribution, expressed by the venom gland.

It is found in the secreted. Its function is as follows. Binds to muscle nicotinic acetylcholine receptor (nAChR) and inhibit acetylcholine from binding to the receptor, thereby impairing neuromuscular transmission. The chain is Short neurotoxin 1 from Austrelaps superbus (Lowland copperhead snake).